Here is a 437-residue protein sequence, read N- to C-terminus: 26S proteasome subunit RPT4 (437 aa).

Residues 1 to 51 (MSEEQDPLLAGLGETSGDNHTQQSHEQQPEQPQETEEHHEEEPSRVDPEQE) form a disordered region. Residue serine 2 is modified to N-acetylserine. A compositionally biased stretch (low complexity) spans 20 to 32 (HTQQSHEQQPEQP). Over residues 35–51 (TEEHHEEEPSRVDPEQE) the composition is skewed to basic and acidic residues. Residue 222–229 (GPPGTGKT) participates in ATP binding.

It belongs to the AAA ATPase family. In terms of processing, N-acetylated by NAT1.

In terms of biological role, the 26S proteasome is involved in the ATP-dependent degradation of ubiquitinated proteins. The regulatory (or ATPase) complex confers ATP dependency and substrate specificity to the 26S complex. The chain is 26S proteasome subunit RPT4 (RPT4) from Saccharomyces cerevisiae (strain ATCC 204508 / S288c) (Baker's yeast).